The following is a 458-amino-acid chain: F-box/LRR-repeat protein At5g02910 (458 aa).

Residues 10-56 (MDFISSLPDEILHHILSSVPTKSAIRTSLLSKRWRYVWSETPSLSID) form the F-box domain. 8 LRR repeats span residues 57-84 (CRRA…HLHT), 86-112 (LLNR…SLES), 133-161 (KQLF…LSLS), 162-187 (NCTL…ELLY), 226-251 (CLRL…DLNI), 260-285 (TAGF…TIGG), 325-353 (KLLR…HLND), and 389-414 (ESNL…VVLL).

The polypeptide is F-box/LRR-repeat protein At5g02910 (Arabidopsis thaliana (Mouse-ear cress)).